We begin with the raw amino-acid sequence, 165 residues long: Cysteine-rich hydrophobic domain-containing protein 2 (165 aa).

Positions 1–26 form a coiled coil; sequence MADFDEIYEEEEDEERALEEQLLKYS. A CHIC motif (Cys-rich) motif is present at residues 88-106; that stretch reads CGCLCCCCTLGCSMWPVIC.

This sequence belongs to the CHIC family. Post-translationally, palmitoylation in the CHIC motif is required for membrane association.

The protein localises to the membrane. Its subcellular location is the golgi apparatus. The chain is Cysteine-rich hydrophobic domain-containing protein 2 (Chic2) from Mus musculus (Mouse).